We begin with the raw amino-acid sequence, 64 residues long: Peptide Ctri9677 (64 aa).

An N-terminal signal peptide occupies residues 1-22 (MKNNTILFTFLIVFLIASQIEA). At leucine 36 the chain carries Leucine amide. A propeptide spanning residues 40–64 (SEDREFFDFFTDDNLAALEKALKEY) is cleaved from the precursor.

This sequence belongs to the non-disulfide-bridged peptide (NDBP) superfamily. Short antimicrobial peptide (group 4) family. In terms of tissue distribution, expressed by the venom gland.

Its subcellular location is the secreted. Antimicrobial peptide. The chain is Peptide Ctri9677 from Chaerilus tricostatus (Scorpion).